The following is a 238-amino-acid chain: Ribonuclease-like storage protein (238 aa).

A signal peptide spans 1-23; it reads MRAIYIISVIIVSLSIFSWGGNA. Gln-37 provides a ligand contact to RNA. A disulfide bridge connects residues Cys-43 and Cys-49. RNA-binding positions include His-61, Phe-109, 112–113, and 116–117; these read HE and KH. Catalysis depends on His-61, which acts as the Proton donor. Cystine bridges form between Cys-76-Cys-120 and Cys-196-Cys-207. Residue Glu-113 is part of the active site. His-117 functions as the Proton acceptor in the catalytic mechanism.

The protein belongs to the RNase T2 family. As to quaternary structure, homodimer. As to expression, root.

May act as a storage protein providing a nitrogen source. Seems to have no RNase activity although it has conserved the active site residues. This chain is Ribonuclease-like storage protein, found in Panax ginseng (Korean ginseng).